The following is a 606-amino-acid chain: Lysosomal cobalamin transporter ABCD4 (606 aa).

The ABC transmembrane type-1 domain maps to 39 to 332 (NVLMFMTLLC…CFTQLIDLST (294 aa)). 5 consecutive transmembrane segments (helical) span residues 43–63 (FMTLLCVTLLEQLVIYQVGLI), 76–96 (LDGFKALTLLAVTLIVLNSTL), 190–210 (IFGYFIVGTMVNKTLMGPIVT), 279–299 (YLGSILSYVVIAIPIFSGVYG), and 314–334 (AFVCIYLISCFTQLIDLSTTL). In terms of domain architecture, ABC transporter spans 389 to 603 (LDRVSILAPS…GGGSWELTRI (215 aa)). ATP is bound at residue 421-428 (GNTGTGKT).

Belongs to the ABC transporter superfamily. ABCD family. Peroxisomal fatty acyl CoA transporter (TC 3.A.1.203) subfamily. In terms of assembly, homodimer or heterodimer. Interacts with LMBRD1; this interaction induces the translocation of ABCD4 from the ER to the lysosome membrane. Interacts with LMBRD1 and MMACHC; this interaction ensures the transport of cobalamin from the lysosome to the cytosol.

It is found in the endoplasmic reticulum membrane. The protein resides in the lysosome membrane. It carries out the reaction an R-cob(III)alamin(out) + ATP + H2O = an R-cob(III)alamin(in) + ADP + phosphate + H(+). Its function is as follows. Lysosomal membrane protein that transports cobalamin (Vitamin B12) from the lysosomal lumen to the cytosol in an ATP-dependent manner. Targeted by LMBRD1 lysosomal chaperone from the endoplasmic reticulum to the lysosomal membrane. Then forms a complex with lysosomal chaperone LMBRD1 and cytosolic MMACHC to transport cobalamin across the lysosomal membrane. This is Lysosomal cobalamin transporter ABCD4 from Mus musculus (Mouse).